We begin with the raw amino-acid sequence, 249 residues long: Ubiquinone biosynthesis O-methyltransferase (249 aa).

S-adenosyl-L-methionine is bound by residues arginine 44, glycine 75, aspartate 96, and methionine 138.

It belongs to the methyltransferase superfamily. UbiG/COQ3 family.

The catalysed reaction is a 3-demethylubiquinol + S-adenosyl-L-methionine = a ubiquinol + S-adenosyl-L-homocysteine + H(+). It catalyses the reaction a 3-(all-trans-polyprenyl)benzene-1,2-diol + S-adenosyl-L-methionine = a 2-methoxy-6-(all-trans-polyprenyl)phenol + S-adenosyl-L-homocysteine + H(+). The protein operates within cofactor biosynthesis; ubiquinone biosynthesis. Functionally, O-methyltransferase that catalyzes the 2 O-methylation steps in the ubiquinone biosynthetic pathway. This is Ubiquinone biosynthesis O-methyltransferase from Paramagnetospirillum magneticum (strain ATCC 700264 / AMB-1) (Magnetospirillum magneticum).